Consider the following 300-residue polypeptide: Ribosomal RNA small subunit methyltransferase H (300 aa).

S-adenosyl-L-methionine is bound by residues 35 to 37 (GGH), aspartate 55, phenylalanine 82, aspartate 100, and glutamine 107.

Belongs to the methyltransferase superfamily. RsmH family.

The protein localises to the cytoplasm. The catalysed reaction is cytidine(1402) in 16S rRNA + S-adenosyl-L-methionine = N(4)-methylcytidine(1402) in 16S rRNA + S-adenosyl-L-homocysteine + H(+). Specifically methylates the N4 position of cytidine in position 1402 (C1402) of 16S rRNA. This is Ribosomal RNA small subunit methyltransferase H from Chlamydia trachomatis serovar A (strain ATCC VR-571B / DSM 19440 / HAR-13).